The following is a 483-amino-acid chain: SET domain and MYND-type zinc finger protein 6 (483 aa).

One can recognise an SET domain in the interval 4 to 228 (PLIASVILPE…KDEQLFISYI (225 aa)). Zn(2+)-binding residues include cysteine 49, cysteine 52, cysteine 62, cysteine 65, cysteine 71, cysteine 75, histidine 83, and cysteine 87. The MYND-type zinc-finger motif lies at 49–87 (CSTCTEEKVKTQRCAACKIIHYCSKGCQKADWPFHKLEC).

It belongs to the class V-like SAM-binding methyltransferase superfamily.

Its subcellular location is the cytoplasm. The protein localises to the nucleus. This Schizosaccharomyces pombe (strain 972 / ATCC 24843) (Fission yeast) protein is SET domain and MYND-type zinc finger protein 6 (set6).